The primary structure comprises 114 residues: Kita-kyushu lung cancer antigen 1 homolog (114 aa).

Topologically, residues 1–4 (MNVY) are cytoplasmic. The helical; Signal-anchor for type II membrane protein transmembrane segment at 5-22 (LLLASGILCALMTVFWKY) threads the bilayer. At 23–114 (RRFQRNTGEM…RSASAHRKST (92 aa)) the chain is on the extracellular side. The N-linked (GlcNAc...) asparagine glycan is linked to asparagine 84.

It localises to the cell membrane. In Macaca fascicularis (Crab-eating macaque), this protein is Kita-kyushu lung cancer antigen 1 homolog (CT83).